Here is a 930-residue protein sequence, read N- to C-terminus: Endoplasmic reticulum aminopeptidase 1 (930 aa).

Residues 1-2 (MP) are Cytoplasmic-facing. Residues 3-23 (SLLPLVLTFLSVSSPSWCQNS) traverse the membrane as a helical; Signal-anchor for type II membrane protein segment. The Lumenal segment spans residues 24–930 (DIESLKASNG…WLQKEKPELL (907 aa)). N-linked (GlcNAc...) asparagine glycosylation is found at asparagine 59 and asparagine 143. Residues glutamate 172 and 306 to 310 (GAMEN) each bind substrate. Zn(2+) is bound at residue histidine 342. Glutamate 343 is a catalytic residue. Positions 346 and 365 each coordinate Zn(2+). Cysteines 393 and 432 form a disulfide. N-linked (GlcNAc...) asparagine glycosylation is found at asparagine 403 and asparagine 655. Cysteines 725 and 732 form a disulfide. N-linked (GlcNAc...) asparagine glycosylation is found at asparagine 749 and asparagine 890.

This sequence belongs to the peptidase M1 family. Monomer. May also exist as a heterodimer; with ERAP2. Interacts with RBMX. Requires Zn(2+) as cofactor. N-glycosylated.

The protein resides in the endoplasmic reticulum membrane. Its function is as follows. Aminopeptidase that plays a central role in peptide trimming, a step required for the generation of most HLA class I-binding peptides. Peptide trimming is essential to customize longer precursor peptides to fit them to the correct length required for presentation on MHC class I molecules. Strongly prefers substrates 9-16 residues long. Rapidly degrades 13-mer to a 9-mer and then stops. Preferentially hydrolyzes the residue Leu and peptides with a hydrophobic C-terminus, while it has weak activity toward peptides with charged C-terminus. May play a role in the inactivation of peptide hormones. May be involved in the regulation of blood pressure through the inactivation of angiotensin II and/or the generation of bradykinin in the kidney. The chain is Endoplasmic reticulum aminopeptidase 1 (Erap1) from Mus musculus (Mouse).